The following is a 436-amino-acid chain: Transcriptional regulator dmxR14 (436 aa).

Over residues 1–27 the composition is skewed to polar residues; it reads MEEAETNTQVDSVPSNSVRSGAELSSK. The segment at 1-32 is disordered; the sequence is MEEAETNTQVDSVPSNSVRSGAELSSKSKLRD. The segment at residues 34 to 61 is a DNA-binding region (zn(2)-C6 fungal-type); it reads CHACARSKVRCPKQKPSCSRCEARGTTC. Positions 67–136 are disordered; that stretch reads RRPGRRRETS…ITTVHNGPEN (70 aa). Positions 90–136 are enriched in polar residues; that stretch reads SHANNRNSPSFSSTRSTLPSPIASDSNSNFTQPQNSSITTVHNGPEN.

The protein resides in the nucleus. In terms of biological role, transcriptional regulator; part of the gene cluster that mediates the biosynthesis of the dimeric xanthones cryptosporioptides. This is Transcriptional regulator dmxR14 from Cryptosporiopsis sp. (strain 8999).